The chain runs to 105 residues: Small ribosomal subunit protein uS10 (105 aa).

It belongs to the universal ribosomal protein uS10 family. As to quaternary structure, part of the 30S ribosomal subunit.

In terms of biological role, involved in the binding of tRNA to the ribosomes. In Rickettsia conorii (strain ATCC VR-613 / Malish 7), this protein is Small ribosomal subunit protein uS10.